The sequence spans 185 residues: Ribosome-recycling factor (185 aa).

The protein belongs to the RRF family.

Its subcellular location is the cytoplasm. Responsible for the release of ribosomes from messenger RNA at the termination of protein biosynthesis. May increase the efficiency of translation by recycling ribosomes from one round of translation to another. In Baumannia cicadellinicola subsp. Homalodisca coagulata, this protein is Ribosome-recycling factor.